Consider the following 121-residue polypeptide: Large ribosomal subunit protein uL18 (121 aa).

This sequence belongs to the universal ribosomal protein uL18 family. In terms of assembly, part of the 50S ribosomal subunit; part of the 5S rRNA/L5/L18/L25 subcomplex. Contacts the 5S and 23S rRNAs.

In terms of biological role, this is one of the proteins that bind and probably mediate the attachment of the 5S RNA into the large ribosomal subunit, where it forms part of the central protuberance. This Paracidovorax citrulli (strain AAC00-1) (Acidovorax citrulli) protein is Large ribosomal subunit protein uL18.